The primary structure comprises 227 residues: Ribose-5-phosphate isomerase A (227 aa).

Substrate is bound by residues 26 to 29 (TGST), 82 to 85 (DGAD), and 95 to 98 (KGGG). Glutamate 104 (proton acceptor) is an active-site residue. Residue lysine 122 participates in substrate binding.

The protein belongs to the ribose 5-phosphate isomerase family. In terms of assembly, homodimer.

It catalyses the reaction aldehydo-D-ribose 5-phosphate = D-ribulose 5-phosphate. It functions in the pathway carbohydrate degradation; pentose phosphate pathway; D-ribose 5-phosphate from D-ribulose 5-phosphate (non-oxidative stage): step 1/1. Functionally, catalyzes the reversible conversion of ribose-5-phosphate to ribulose 5-phosphate. In Streptococcus pneumoniae (strain ATCC 700669 / Spain 23F-1), this protein is Ribose-5-phosphate isomerase A.